A 689-amino-acid polypeptide reads, in one-letter code: Glycine--tRNA ligase beta subunit (689 aa).

The protein belongs to the class-II aminoacyl-tRNA synthetase family. Tetramer of two alpha and two beta subunits.

The protein localises to the cytoplasm. The enzyme catalyses tRNA(Gly) + glycine + ATP = glycyl-tRNA(Gly) + AMP + diphosphate. This is Glycine--tRNA ligase beta subunit from Shewanella sediminis (strain HAW-EB3).